A 153-amino-acid chain; its full sequence is uncharacterized protein (153 aa).

Residues 17–78 (IYIHTPHPHP…HTTLSNLSLN (62 aa)) are disordered. Over residues 22–38 (PHPHPHPHPHTPTHTHP) the composition is skewed to basic residues.

This is an uncharacterized protein from Saccharomyces cerevisiae (strain ATCC 204508 / S288c) (Baker's yeast).